A 156-amino-acid polypeptide reads, in one-letter code: Small ribosomal subunit protein uS7 (156 aa).

It belongs to the universal ribosomal protein uS7 family. As to quaternary structure, part of the 30S ribosomal subunit. Contacts proteins S9 and S11.

One of the primary rRNA binding proteins, it binds directly to 16S rRNA where it nucleates assembly of the head domain of the 30S subunit. Is located at the subunit interface close to the decoding center, probably blocks exit of the E-site tRNA. This chain is Small ribosomal subunit protein uS7, found in Coprothermobacter proteolyticus (strain ATCC 35245 / DSM 5265 / OCM 4 / BT).